The chain runs to 426 residues: Serine--tRNA ligase (426 aa).

231–233 is an L-serine binding site; the sequence is TAE. Residue 262 to 264 participates in ATP binding; sequence RSE. An L-serine-binding site is contributed by E285. Residue 349–352 coordinates ATP; the sequence is EISS. S384 provides a ligand contact to L-serine.

Belongs to the class-II aminoacyl-tRNA synthetase family. Type-1 seryl-tRNA synthetase subfamily. As to quaternary structure, homodimer. The tRNA molecule binds across the dimer.

The protein localises to the cytoplasm. It catalyses the reaction tRNA(Ser) + L-serine + ATP = L-seryl-tRNA(Ser) + AMP + diphosphate + H(+). It carries out the reaction tRNA(Sec) + L-serine + ATP = L-seryl-tRNA(Sec) + AMP + diphosphate + H(+). Its pathway is aminoacyl-tRNA biosynthesis; selenocysteinyl-tRNA(Sec) biosynthesis; L-seryl-tRNA(Sec) from L-serine and tRNA(Sec): step 1/1. Catalyzes the attachment of serine to tRNA(Ser). Is also able to aminoacylate tRNA(Sec) with serine, to form the misacylated tRNA L-seryl-tRNA(Sec), which will be further converted into selenocysteinyl-tRNA(Sec). This is Serine--tRNA ligase from Laribacter hongkongensis (strain HLHK9).